A 283-amino-acid polypeptide reads, in one-letter code: Probable endonuclease 4 (283 aa).

Residues H69, H109, E145, D179, H182, H216, D229, H231, and E261 each coordinate Zn(2+).

The protein belongs to the AP endonuclease 2 family. Zn(2+) serves as cofactor.

The enzyme catalyses Endonucleolytic cleavage to 5'-phosphooligonucleotide end-products.. Endonuclease IV plays a role in DNA repair. It cleaves phosphodiester bonds at apurinic or apyrimidinic (AP) sites, generating a 3'-hydroxyl group and a 5'-terminal sugar phosphate. This chain is Probable endonuclease 4, found in Campylobacter curvus (strain 525.92).